Consider the following 426-residue polypeptide: Glutamate-1-semialdehyde 2,1-aminomutase (426 aa).

Lys-265 is subject to N6-(pyridoxal phosphate)lysine.

It belongs to the class-III pyridoxal-phosphate-dependent aminotransferase family. HemL subfamily. As to quaternary structure, homodimer. It depends on pyridoxal 5'-phosphate as a cofactor.

Its subcellular location is the cytoplasm. It carries out the reaction (S)-4-amino-5-oxopentanoate = 5-aminolevulinate. Its pathway is porphyrin-containing compound metabolism; protoporphyrin-IX biosynthesis; 5-aminolevulinate from L-glutamyl-tRNA(Glu): step 2/2. The protein is Glutamate-1-semialdehyde 2,1-aminomutase of Shigella flexneri serotype 5b (strain 8401).